A 559-amino-acid chain; its full sequence is Tectonic-like complex member MKS1 (559 aa).

Positions 311-439 (LRLFVNGEVV…TVSTWRPVEL (129 aa)) constitute a C2 B9-type domain.

In terms of assembly, part of the tectonic-like complex (also named B9 complex). Interacts with TMEM107. Interacts with TCTN3, AHI1, TCTN1, TCTN2, CC2D2A. Interacts with FLNA. Interacts with TMEM67. Interacts with B9D1 and B9D2.

The protein localises to the cytoplasm. The protein resides in the cytoskeleton. Its subcellular location is the cilium basal body. It is found in the microtubule organizing center. It localises to the centrosome. In terms of biological role, component of the tectonic-like complex, a complex localized at the transition zone of primary cilia and acting as a barrier that prevents diffusion of transmembrane proteins between the cilia and plasma membranes. Involved in centrosome migration to the apical cell surface during early ciliogenesis. Required for ciliary structure and function, including a role in regulating length and appropriate number through modulating centrosome duplication. Required for cell branching morphology. In Homo sapiens (Human), this protein is Tectonic-like complex member MKS1 (MKS1).